The following is an 87-amino-acid chain: Antitoxin YefM (87 aa).

The protein belongs to the phD/YefM antitoxin family. Forms a complex with YoeB which inhibits its toxin activity.

Antitoxin component of a type II toxin-antitoxin (TA) system. A probable antitoxin for the putative mRNA interferase YeoB. This Streptomyces coelicolor (strain ATCC BAA-471 / A3(2) / M145) protein is Antitoxin YefM.